We begin with the raw amino-acid sequence, 436 residues long: 3-ketoacyl-CoA thiolase (436 aa).

The active-site Acyl-thioester intermediate is C99. Active-site proton acceptor residues include H392 and C422.

This sequence belongs to the thiolase-like superfamily. Thiolase family. As to quaternary structure, heterotetramer of two alpha chains (FadJ) and two beta chains (FadI).

Its subcellular location is the cytoplasm. It carries out the reaction an acyl-CoA + acetyl-CoA = a 3-oxoacyl-CoA + CoA. It participates in lipid metabolism; fatty acid beta-oxidation. Catalyzes the final step of fatty acid oxidation in which acetyl-CoA is released and the CoA ester of a fatty acid two carbons shorter is formed. In Escherichia coli (strain 55989 / EAEC), this protein is 3-ketoacyl-CoA thiolase.